Consider the following 146-residue polypeptide: D-aminoacyl-tRNA deacylase (146 aa).

A Gly-cisPro motif, important for rejection of L-amino acids motif is present at residues 137–138; that stretch reads GP.

This sequence belongs to the DTD family. In terms of assembly, homodimer.

The protein localises to the cytoplasm. It carries out the reaction glycyl-tRNA(Ala) + H2O = tRNA(Ala) + glycine + H(+). The enzyme catalyses a D-aminoacyl-tRNA + H2O = a tRNA + a D-alpha-amino acid + H(+). Its function is as follows. An aminoacyl-tRNA editing enzyme that deacylates mischarged D-aminoacyl-tRNAs. Also deacylates mischarged glycyl-tRNA(Ala), protecting cells against glycine mischarging by AlaRS. Acts via tRNA-based rather than protein-based catalysis; rejects L-amino acids rather than detecting D-amino acids in the active site. By recycling D-aminoacyl-tRNA to D-amino acids and free tRNA molecules, this enzyme counteracts the toxicity associated with the formation of D-aminoacyl-tRNA entities in vivo and helps enforce protein L-homochirality. This is D-aminoacyl-tRNA deacylase from Cellvibrio japonicus (strain Ueda107) (Pseudomonas fluorescens subsp. cellulosa).